A 482-amino-acid chain; its full sequence is BEL1-like homeodomain protein 7 (482 aa).

The segment at 118–134 (SKYLKAAQELLDETVNV) is SR/KY domain. The tract at residues 167 to 238 (ERQELQSKLS…CLRDAISGQI (72 aa)) is BELL domain. Positions 285–347 (TWRPQRGLPD…NARVRLWKPM (63 aa)) form a DNA-binding region, homeobox. Positions 358–401 (DALQENDPNQSSENTPEITEIQELQTESSSNNGHVPGVASSSMR) are disordered. A compositionally biased stretch (polar residues) spans 363-401 (NDPNQSSENTPEITEIQELQTESSSNNGHVPGVASSSMR).

Belongs to the TALE/BELL homeobox family. As to quaternary structure, may form heterodimeric complexes with TALE/KNOX proteins.

It localises to the nucleus. The polypeptide is BEL1-like homeodomain protein 7 (BLH7) (Arabidopsis thaliana (Mouse-ear cress)).